The primary structure comprises 370 residues: S-adenosylmethionine:tRNA ribosyltransferase-isomerase (370 aa).

It belongs to the QueA family. As to quaternary structure, monomer.

Its subcellular location is the cytoplasm. The enzyme catalyses 7-aminomethyl-7-carbaguanosine(34) in tRNA + S-adenosyl-L-methionine = epoxyqueuosine(34) in tRNA + adenine + L-methionine + 2 H(+). It functions in the pathway tRNA modification; tRNA-queuosine biosynthesis. Transfers and isomerizes the ribose moiety from AdoMet to the 7-aminomethyl group of 7-deazaguanine (preQ1-tRNA) to give epoxyqueuosine (oQ-tRNA). The chain is S-adenosylmethionine:tRNA ribosyltransferase-isomerase from Synechococcus sp. (strain WH7803).